The following is a 630-amino-acid chain: Eukaryotic translation initiation factor 2-alpha kinase 1 (630 aa).

Positions 1–40 (MQGGNSGVRKREEEGDGAGAVAAPPAIDFPAEGPDPEYDE) are disordered. An SIFI-degron motif is present at residues 85-104 (LRSRQVFKLLCQTFIKMGLL). The region spanning 167 to 583 (FEELAILGKG…AIQLLQSELF (417 aa)) is the Protein kinase domain. ATP-binding positions include 173-181 (LGKGGYGRV) and Lys-196. Positions 259-301 (DQEEDREQCGVKNDESSSSSIIFAEPTPEKEKRFGESDTENQN) are disordered. Residue Thr-285 is modified to Phosphothreonine. The span at 285–294 (TPEKEKRFGE) shows a compositional bias: basic and acidic residues. One copy of the HRM 1 repeat lies at 410–415 (ACPYVM). Asp-442 serves as the catalytic Proton acceptor. Residues Thr-486 and Thr-488 each carry the phosphothreonine; by autocatalysis modification. Phosphothreonine is present on Thr-493. An HRM 2 repeat occupies 552 to 557 (RCPVQA).

Belongs to the protein kinase superfamily. Ser/Thr protein kinase family. GCN2 subfamily. Synthesized in an inactive form that binds to the N-terminal domain of CDC37. Has to be associated with a multiprotein complex containing Hsp90, CDC37 and PPP5C for maturation and activation by autophosphorylation. The phosphatase PPP5C modulates this activation. Homodimer; homodimerizes in presence of heme, forming a disulfide-linked inactive homodimer. Interacts with DELE1; binds both to full-length DELE1 and processed form of DELE1 (S-DELE1) in response to stress, leading to activate its protein kinase activity and trigger the integrated stress response (ISR). In terms of processing, activated by autophosphorylation; phosphorylated predominantly on serine and threonine residues, but also on tyrosine residues. Autophosphorylation at Thr-488 is required for kinase activation. The active autophosphorylated form apparently is largely refractory to cellular heme fluctuations. Post-translationally, ubiquitinated and degraded by the SIFI complex once the mitochondrial stress has been resolved, thereby providing stress response silencing. Within the SIFI complex, UBR4 initiates ubiquitin chain that are further elongated or branched by KCMF1.

The enzyme catalyses L-seryl-[protein] + ATP = O-phospho-L-seryl-[protein] + ADP + H(+). The catalysed reaction is L-threonyl-[protein] + ATP = O-phospho-L-threonyl-[protein] + ADP + H(+). Its activity is regulated as follows. In normal conditions, the protein kinase activity is inhibited; inhibition is relieved by various stress conditions. Inhibited by heme: in presence of heme, forms a disulfide-linked inactive homodimer. Heme depletion relieves inhibition and stimulates kinase activity by autophosphorylation. Inhibited by the heme metabolites biliverdin and bilirubin. Induced by oxidative stress generated by arsenite treatment. Binding of nitric oxide (NO) to the heme iron in the N-terminal heme-binding domain activates the kinase activity, while binding of carbon monoxide (CO) suppresses kinase activity. Protein kinase activity is also activated upon binding to DELE1 in response to various stress, triggering the integrated stress response (ISR): activated by full-length DELE1 in response to iron deficiency, while it is activated by the processed form of DELE1 (S-DELE1) in response to mitochondrial stress. Metabolic-stress sensing protein kinase that phosphorylates the alpha subunit of eukaryotic translation initiation factor 2 (EIF2S1/eIF-2-alpha) in response to various stress conditions. Key activator of the integrated stress response (ISR) required for adaptation to various stress, such as heme deficiency, oxidative stress, osmotic shock, mitochondrial dysfunction and heat shock. EIF2S1/eIF-2-alpha phosphorylation in response to stress converts EIF2S1/eIF-2-alpha in a global protein synthesis inhibitor, leading to a global attenuation of cap-dependent translation, while concomitantly initiating the preferential translation of ISR-specific mRNAs, such as the transcriptional activator ATF4, and hence allowing ATF4-mediated reprogramming. Acts as a key sensor of heme-deficiency: in normal conditions, binds hemin via a cysteine thiolate and histidine nitrogenous coordination, leading to inhibit the protein kinase activity. This binding occurs with moderate affinity, allowing it to sense the heme concentration within the cell: heme depletion relieves inhibition and stimulates kinase activity, activating the ISR. Thanks to this unique heme-sensing capacity, plays a crucial role to shut off protein synthesis during acute heme-deficient conditions. In red blood cells (RBCs), controls hemoglobin synthesis ensuring a coordinated regulation of the synthesis of its heme and globin moieties. It thereby plays an essential protective role for RBC survival in anemias of iron deficiency. Iron deficiency also triggers activation by full-length DELE1. Also activates the ISR in response to mitochondrial dysfunction: HRI/EIF2AK1 protein kinase activity is activated upon binding to the processed form of DELE1 (S-DELE1), thereby promoting the ATF4-mediated reprogramming. Also acts as an activator of mitophagy in response to mitochondrial damage: catalyzes phosphorylation of eIF-2-alpha (EIF2S1) following activation by S-DELE1, thereby promoting mitochondrial localization of EIF2S1, triggering PRKN-independent mitophagy. This chain is Eukaryotic translation initiation factor 2-alpha kinase 1, found in Homo sapiens (Human).